The sequence spans 89 residues: Small ribosomal subunit protein uS15 (89 aa).

The protein belongs to the universal ribosomal protein uS15 family. In terms of assembly, part of the 30S ribosomal subunit. Forms a bridge to the 50S subunit in the 70S ribosome, contacting the 23S rRNA.

Functionally, one of the primary rRNA binding proteins, it binds directly to 16S rRNA where it helps nucleate assembly of the platform of the 30S subunit by binding and bridging several RNA helices of the 16S rRNA. Forms an intersubunit bridge (bridge B4) with the 23S rRNA of the 50S subunit in the ribosome. In Prochlorococcus marinus (strain MIT 9515), this protein is Small ribosomal subunit protein uS15.